A 338-amino-acid polypeptide reads, in one-letter code: D-erythrose-4-phosphate dehydrogenase (338 aa).

12 to 13 (RI) is a binding site for NAD(+). Substrate contacts are provided by residues 154–156 (SCT), Arg200, 213–214 (TK), and Arg236. Cys155 functions as the Nucleophile in the catalytic mechanism. Residue Asn318 participates in NAD(+) binding.

It belongs to the glyceraldehyde-3-phosphate dehydrogenase family. Epd subfamily. As to quaternary structure, homotetramer.

It localises to the cytoplasm. The catalysed reaction is D-erythrose 4-phosphate + NAD(+) + H2O = 4-phospho-D-erythronate + NADH + 2 H(+). It participates in cofactor biosynthesis; pyridoxine 5'-phosphate biosynthesis; pyridoxine 5'-phosphate from D-erythrose 4-phosphate: step 1/5. Its function is as follows. Catalyzes the NAD-dependent conversion of D-erythrose 4-phosphate to 4-phosphoerythronate. The sequence is that of D-erythrose-4-phosphate dehydrogenase from Pectobacterium atrosepticum (strain SCRI 1043 / ATCC BAA-672) (Erwinia carotovora subsp. atroseptica).